The primary structure comprises 896 residues: Bifunctional glutamine synthetase adenylyltransferase/adenylyl-removing enzyme (896 aa).

The tract at residues 1–411 (MSDNRLDTAR…LFNEILSEPE (411 aa)) is adenylyl removase. An adenylyl transferase region spans residues 417–896 (NSEWQWAWQD…EVFGEEAATV (480 aa)).

It belongs to the GlnE family. Mg(2+) serves as cofactor.

It carries out the reaction [glutamine synthetase]-O(4)-(5'-adenylyl)-L-tyrosine + phosphate = [glutamine synthetase]-L-tyrosine + ADP. The enzyme catalyses [glutamine synthetase]-L-tyrosine + ATP = [glutamine synthetase]-O(4)-(5'-adenylyl)-L-tyrosine + diphosphate. Functionally, involved in the regulation of glutamine synthetase GlnA, a key enzyme in the process to assimilate ammonia. When cellular nitrogen levels are high, the C-terminal adenylyl transferase (AT) inactivates GlnA by covalent transfer of an adenylyl group from ATP to specific tyrosine residue of GlnA, thus reducing its activity. Conversely, when nitrogen levels are low, the N-terminal adenylyl removase (AR) activates GlnA by removing the adenylyl group by phosphorolysis, increasing its activity. The regulatory region of GlnE binds the signal transduction protein PII (GlnB) which indicates the nitrogen status of the cell. The protein is Bifunctional glutamine synthetase adenylyltransferase/adenylyl-removing enzyme of Neisseria meningitidis serogroup B (strain ATCC BAA-335 / MC58).